The primary structure comprises 332 residues: dTDP-3,4-didehydro-2,6-dideoxy-alpha-D-glucose 3-reductase (332 aa).

12–18 (CASFAWR) is a binding site for NADP(+). Arg-19 is a substrate binding site. Residues 37–38 (SR), Tyr-58, Leu-74, and His-79 contribute to the NADP(+) site. The active-site Proton donor is the Lys-97. Residues Arg-165 and Asp-177 each coordinate NADP(+). Substrate contacts are provided by Tyr-235 and Thr-255.

The protein belongs to the Gfo/Idh/MocA family. In terms of assembly, monomer.

It catalyses the reaction dTDP-4-dehydro-2,6-dideoxy-alpha-D-glucose + NADP(+) = dTDP-3,4-didehydro-2,6-dideoxy-alpha-D-glucose + NADPH + H(+). Its function is as follows. Involved in the biosynthesis of forosamine ((4-dimethylamino)-2,3,4,6-tetradeoxy-alpha-D-threo-hexopyranose), a highly deoxygenated sugar component of several bioactive natural products such as the insecticidal spinosyns A and D. Catalyzes the reduction of the C-3 keto moiety of dTDP-3,4-diketo-2,6-dideoxy-alpha-D-glucose to yield dTDP-4-keto-2,6-dideoxy-alpha-D-glucose. NADPH is the better reductant, however NADH can also be used. In Saccharopolyspora spinosa, this protein is dTDP-3,4-didehydro-2,6-dideoxy-alpha-D-glucose 3-reductase.